The following is a 1170-amino-acid chain: MNVLWIIALVGQLMRLVQGTATCAMYGNCGKKSVFGNELPCPVPRSFEPPVLSDETSKLLVEVCGEEWKEVRYACCTKDQVVALRDNLQKAQPLISSCPACLKNFNNLFCHFTCAADQGRFVNITKVEKSKEDKDIVAELDVFMNSSWASEFYDSCKNIKFSATNGYAMDLIGGGAKNYSQFLKFLGDAKPMLGGSPFQINYKYDLANEEKEWQEFNDEVYACDDAQYKCACSDCQESCPHLKPLKDGVCKVGPLPCFSLSVLIFYTICALFAFMWYYLCKRKKNGAMIVDDDIVPESGSLDESETNVFESFNNETNFFNGKLANLFTKVGQFSVENPYKILITTVFSIFVFSFIIFQYATLETDPINLWVSKNSEKFKEKEYFDDNFGPFYRTEQIFVVNETGPVLSYETLHWWFDVENFITEELQSSENIGYQDLCFRPTEDSTCVIESFTQYFQGALPNKDSWKRELQECGKFPVNCLPTFQQPLKTNLLFSDDDILNAHAFVVTLLLTNHTQSANRWEERLEEYLLDLKVPEGLRISFNTEISLEKELNNNNDISTVAISYLMMFLYATWALRRKDGKTRLLLGISGLLIVLASIVCAAGFLTLFGLKSTLIIAEVIPFLILAIGIDNIFLITHEYDRNCEQKPEYSIDQKIISAIGRMSPSILMSLLCQTGCFLIAAFVTMPAVHNFAIYSTVSVIFNGVLQLTAYVSILSLYEKRSNYKQITGNEETKESFLKTFYFKMLTQKRLIIIIFSAWFFTSLVFLPEIQFGLDQTLAVPQDSYLVDYFKDVYSFLNVGPPVYMVVKNLDLTKRQNQQKICGKFTTCERDSLANVLEQERHRSTITEPLANWLDDYFMFLNPQNDQCCRLKKGTDEVCPPSFPSRRCETCFQQGSWNYNMSGFPEGKDFMEYLSIWINAPSDPCPLGGRAPYSTALVYNETSVSASVFRTAHHPLRSQKDFIQAYSDGVRISSSFPELDMFAYSPFYIFFVQYQTLGPLTLKLIGSAIILIFFISSVFLQNIRSSFLLALVVTMIIVDIGALMALLGISLNAVSLVNLIICVGLGVEFCVHIVRSFTVVPSETKKDANSRVLYSLNTIGESVIKGITLTKFIGVCVLAFAQSKIFDVFYFRMWFTLIIVAALHALLFLPALLSLFGGESYRDDSIEAED.

Residues 1-19 (MNVLWIIALVGQLMRLVQG) form the signal peptide. 8 disulfide bridges follow: cysteine 23/cysteine 75, cysteine 29/cysteine 41, cysteine 64/cysteine 110, cysteine 76/cysteine 114, cysteine 98/cysteine 230, cysteine 101/cysteine 156, cysteine 223/cysteine 235, and cysteine 232/cysteine 239. N-linked (GlcNAc...) asparagine glycosylation is found at asparagine 123, asparagine 145, and asparagine 178. A helical transmembrane segment spans residues 260 to 280 (LSVLIFYTICALFAFMWYYLC). Residue asparagine 314 is glycosylated (N-linked (GlcNAc...) asparagine). Residues 341-361 (ILITTVFSIFVFSFIIFQYAT) traverse the membrane as a helical segment. A glycan (N-linked (GlcNAc...) asparagine) is linked at asparagine 401. 2 disulfides stabilise this stretch: cysteine 438/cysteine 447 and cysteine 473/cysteine 480. Asparagine 513 carries N-linked (GlcNAc...) asparagine glycosylation. The next 6 membrane-spanning stretches (helical) occupy residues 556–576 (NDIS…TWAL), 585–605 (LLLG…AAGF), 616–636 (IIAE…IFLI), 667–687 (ILMS…VTMP), 698–718 (VSVI…LSLY), and 752–772 (IIII…EIQF). Positions 557-717 (DISTVAISYL…LTAYVSILSL (161 aa)) constitute an SSD domain. 4 disulfides stabilise this stretch: cysteine 822-cysteine 828, cysteine 868-cysteine 925, cysteine 869-cysteine 891, and cysteine 879-cysteine 888. 2 N-linked (GlcNAc...) asparagine glycosylation sites follow: asparagine 900 and asparagine 940. 5 helical membrane-spanning segments follow: residues 1000 to 1020 (LTLK…SVFL), 1027 to 1047 (FLLA…MALL), 1054 to 1074 (VSLV…VHIV), 1099 to 1119 (IGES…CVLA), and 1133 to 1153 (MWFT…PALL).

This sequence belongs to the patched family.

The protein resides in the vacuole membrane. Functionally, involved in sphingolipid trafficking. May recycle sphingolipids between cellular membranous compartments. This is NPC intracellular sterol transporter 1-related protein 1 from Saccharomyces cerevisiae (strain ATCC 204508 / S288c) (Baker's yeast).